A 336-amino-acid polypeptide reads, in one-letter code: uncharacterized protein (336 aa).

To bacterial alkanal monooxygenase alpha and beta chains.

This is an uncharacterized protein from Bacillus subtilis (strain 168).